Consider the following 300-residue polypeptide: uncharacterized protein (300 aa).

The span at 1 to 11 shows a compositional bias: polar residues; it reads MYNEGVTSPSQ. The disordered stretch occupies residues 1–20; the sequence is MYNEGVTSPSQLARKKNATD. The segment at residues 1–92 is a DNA-binding region (recombinase); the sequence is MYNEGVTSPS…QEILITRKRR (92 aa). The stretch at 162–249 forms a coiled coil; it reads SKENYFKELS…DLEFQKIEKE (88 aa).

This is an uncharacterized protein from Bacillus subtilis (strain 168).